The primary structure comprises 1323 residues: Glutamate receptor ionotropic, NMDA 2D (1323 aa).

Residues 1 to 27 form the signal peptide; it reads MRGAGGPRGPRGPAKMLLLLALACASP. Topologically, residues 28–579 are extracellular; the sequence is FPEEVPGPGA…SPSAFLEPYS (552 aa). Asparagine 89 carries an N-linked (GlcNAc...) asparagine glycan. A disulfide bridge connects residues cysteine 101 and cysteine 345. 4 N-linked (GlcNAc...) asparagine glycosylation sites follow: asparagine 349, asparagine 363, asparagine 381, and asparagine 464. Intrachain disulfides connect cysteine 452/cysteine 480 and cysteine 459/cysteine 481. L-glutamate contacts are provided by serine 536, threonine 538, and arginine 543. Residue asparagine 566 is glycosylated (N-linked (GlcNAc...) asparagine). The helical transmembrane segment at 580 to 601 threads the bilayer; sequence PAVWVMMFVMCLTVVAVTVFIF. Residues 602–626 lie on the Cytoplasmic side of the membrane; the sequence is EYLSPVGYNRSLATGKRPGGSTFTI. Residues 627 to 638 constitute an intramembrane region (discontinuously helical); that stretch reads GKSIWLLWALVF. Positions 628–647 are pore-forming; the sequence is KSIWLLWALVFNNSVPVENP. The Cytoplasmic segment spans residues 639–650; that stretch reads NNSVPVENPRGT. A helical transmembrane segment spans residues 651-671; sequence TSKIMVLVWAFFAVIFLASYT. Topologically, residues 672–840 are extracellular; the sequence is ANLAAFMIQE…EVMSSKLDID (169 aa). An N-linked (GlcNAc...) asparagine glycan is attached at asparagine 712. L-glutamate-binding residues include serine 714, threonine 715, and aspartate 756. The cysteines at positions 770 and 825 are disulfide-linked. The chain crosses the membrane as a helical span at residues 841–864; the sequence is NMAGVFYMLLVAMGLSLLVFAWEH. Topologically, residues 865–1323 are cytoplasmic; the sequence is LVYWRLRHCL…AHFSSLESEV (459 aa). Disordered regions lie at residues 897–952, 977–1112, and 1201–1323; these read EAAP…PGGA, AAPR…SLGG, and PWAA…ESEV. Residues 899–929 show a composition bias toward pro residues; sequence APPPAKPPPPPQPLPSPAYPAARPPPGPAPF. The segment covering 931 to 940 has biased composition (basic and acidic residues); sequence PRERAAADRW. Over residues 977-986 the composition is skewed to low complexity; it reads AAPRGAAGRP. Positions 987 to 1001 are enriched in pro residues; that stretch reads LSPPTTQPPQKPPPS. The span at 1030 to 1039 shows a compositional bias: low complexity; that stretch reads AAAAAAVGPP. The segment covering 1080–1092 has biased composition (pro residues); that stretch reads TAPPPRRAAPPPC. Residues 1208 to 1228 show a composition bias toward basic residues; it reads PRRRARCGCPRPHPHRPRASH. At arginine 1303 the chain carries Omega-N-methylarginine. A Phosphoserine modification is found at serine 1313. A PDZ-binding motif is present at residues 1321-1323; sequence SEV.

It belongs to the glutamate-gated ion channel (TC 1.A.10.1) family. NR2D/GRIN2D subfamily. Heterotetramer. Forms heterotetrameric channels composed of two GluN1/zeta subunits (GRIN1), and two identical GluN2/epsilon subunits (GRIN2A, GRIN2B, GRIN2C or GRIN2D) or GluN3 subunits (GRIN3A or GRIN3B) (in vitro). In vivo, the subunit composition may depend on the expression levels of the different subunits. Interacts with PDZ domains of PATJ and DLG4. In terms of tissue distribution, expressed in brain, mainly in the subcortical region.

It localises to the cell membrane. Its subcellular location is the postsynaptic cell membrane. It catalyses the reaction Ca(2+)(in) = Ca(2+)(out). It carries out the reaction Na(+)(in) = Na(+)(out). The enzyme catalyses K(+)(in) = K(+)(out). In terms of biological role, component of N-methyl-D-aspartate (NMDA) receptors (NMDARs) that function as heterotetrameric, ligand-gated cation channels with high calcium permeability and voltage-dependent block by Mg(2+). Participates in synaptic plasticity for learning and memory formation. Channel activation requires binding of the neurotransmitter L-glutamate to the GluN2 subunit, glycine or D-serine binding to the GluN1 subunit, plus membrane depolarization to eliminate channel inhibition by Mg(2+). NMDARs mediate simultaneously the potasium efflux and the influx of calcium and sodium. Each GluN2 subunit confers differential attributes to channel properties, including activation, deactivation and desensitization kinetics, pH sensitivity, Ca2(+) permeability, and binding to allosteric modulators. The protein is Glutamate receptor ionotropic, NMDA 2D of Rattus norvegicus (Rat).